A 468-amino-acid chain; its full sequence is Aldehyde dehydrogenase family 3 member B1 (468 aa).

Methionine 1 carries the N-acetylmethionine modification. NAD(+) is bound at residue 188-193; it reads GSPRVG. Catalysis depends on residues glutamate 210 and cysteine 244. A lipid anchor (S-palmitoyl cysteine) is attached at cysteine 463. Residue cysteine 465 is modified to Cysteine methyl ester. The S-geranylgeranyl cysteine moiety is linked to residue cysteine 465. The propeptide at 466–468 is removed in mature form; the sequence is TLL.

The protein belongs to the aldehyde dehydrogenase family. Dually lipidated in the C-terminus; prenylation occurs prior to, and is a prerequisite for palmitoylation. It is also required for activity towards long-chain substrates. As to expression, highest expression in kidney and lung.

It is found in the cell membrane. It carries out the reaction an aldehyde + NADP(+) + H2O = a carboxylate + NADPH + 2 H(+). It catalyses the reaction an aldehyde + NAD(+) + H2O = a carboxylate + NADH + 2 H(+). The catalysed reaction is a long-chain fatty aldehyde + NAD(+) + H2O = a long-chain fatty acid + NADH + 2 H(+). The enzyme catalyses a medium-chain fatty aldehyde + NAD(+) + H2O = a medium-chain fatty acid + NADH + 2 H(+). It carries out the reaction octanal + NAD(+) + H2O = octanoate + NADH + 2 H(+). It catalyses the reaction nonanal + NAD(+) + H2O = nonanoate + NADH + 2 H(+). The catalysed reaction is hexadecanoate + NADH + 2 H(+) = hexadecanal + NAD(+) + H2O. The enzyme catalyses (2E)-octenal + NAD(+) + H2O = (2E)-octenoate + NADH + 2 H(+). It carries out the reaction (E)-non-2-enal + NAD(+) + H2O = (E)-non-2-enoate + NADH + 2 H(+). It catalyses the reaction (E)-4-hydroxynon-2-enal + NAD(+) + H2O = (E)-4-hydroxynon-2-enoate + NADH + 2 H(+). The catalysed reaction is (2E)-hexadecenal + NAD(+) + H2O = (E)-hexadec-2-enoate + NADH + 2 H(+). The enzyme catalyses benzaldehyde + NAD(+) + H2O = benzoate + NADH + 2 H(+). It carries out the reaction a medium-chain fatty aldehyde + NADP(+) + H2O = a medium-chain fatty acid + NADPH + 2 H(+). It catalyses the reaction hexanal + NADP(+) + H2O = hexanoate + NADPH + 2 H(+). The catalysed reaction is octanal + NADP(+) + H2O = octanoate + NADPH + 2 H(+). The enzyme catalyses nonanal + NADP(+) + H2O = nonanoate + NADPH + 2 H(+). It carries out the reaction (2E)-octenal + NADP(+) + H2O = (2E)-octenoate + NADPH + 2 H(+). It catalyses the reaction (E)-non-2-enal + NADP(+) + H2O = (E)-non-2-enoate + NADPH + 2 H(+). The catalysed reaction is (E)-4-hydroxynon-2-enal + NADP(+) + H2O = (E)-4-hydroxynon-2-enoate + NADPH + 2 H(+). The enzyme catalyses benzaldehyde + NADP(+) + H2O = benzoate + NADPH + 2 H(+). It participates in alcohol metabolism; ethanol degradation; acetate from ethanol: step 2/2. Its function is as follows. Oxidizes medium and long chain saturated and unsaturated fatty aldehydes generated in the plasma membrane into non-toxic fatty acids. May have a protective role against the cytotoxicity induced by lipid peroxidation. Short-chain fatty aldehydes are not good substrates. Can use both NADP(+) and NAD(+) as electron acceptor in vitro, however in vivo preference will depend on their tissue levels. Low activity towards acetaldehyde and 3,4-dihydroxyphenylacetaldehyde. Able to metabolize aromatic aldehydes such as benzaldehyde to their acid form. This Homo sapiens (Human) protein is Aldehyde dehydrogenase family 3 member B1 (ALDH3B1).